The following is a 330-amino-acid chain: Putative protein N-methyltransferase FAM86B2 (330 aa).

An N-acetylmethionine modification is found at Met-1. S-adenosyl-L-methionine-binding positions include Trp-139, 165–167 (GSG), Trp-228, and Ala-247.

It belongs to the class I-like SAM-binding methyltransferase superfamily. EEF2KMT family. Interacts with EEF2KMT.

The protein is Putative protein N-methyltransferase FAM86B2 (FAM86B2) of Homo sapiens (Human).